The sequence spans 281 residues: MIENRRGLTIFSHTMLILGIAVILFPLYVAFVAATLDDRAVFETPMTLLPGTQLLENIKTIWVNGVGVNSAPFWLMMLNSFIMAFSITVGKITVSMLSAFAIVWFRFPLRNLFFWMIFITLMLPVEVRIFPTVEVIANLKMLNSYAGLTLPLMASATATFLFRQFFMTLPDELVEAARIDGASPMRFFRDIVLPLSKTNLAALFVITFIYGWNQYLWPLLIITDVNLGTAVAGIKGMIATGEGTTQWNQVMAAMLLTLIPPVVIVLAMQRAFVRGLVDSEK.

6 helical membrane-spanning segments follow: residues 16-36 (LILG…AATL), 85-105 (FSIT…IVWF), 113-133 (FFWM…FPTV), 142-162 (LNSY…TFLF), 202-222 (ALFV…LLII), and 247-267 (WNQV…IVLA). One can recognise an ABC transmembrane type-1 domain in the interval 77–268 (MLNSFIMAFS…IPPVVIVLAM (192 aa)).

The protein belongs to the binding-protein-dependent transport system permease family. UgpAE subfamily. The complex is composed of two ATP-binding proteins (UgpC), two transmembrane proteins (UgpA and UgpE) and a solute-binding protein (UgpB).

It is found in the cell inner membrane. Functionally, part of the ABC transporter complex UgpBAEC involved in sn-glycerol-3-phosphate (G3P) import. Probably responsible for the translocation of the substrate across the membrane. The chain is sn-glycerol-3-phosphate transport system permease protein UgpE (ugpE) from Salmonella typhi.